We begin with the raw amino-acid sequence, 245 residues long: PF03932 family protein CutC (245 aa).

Belongs to the CutC family.

It is found in the cytoplasm. The protein is PF03932 family protein CutC of Caulobacter vibrioides (strain ATCC 19089 / CIP 103742 / CB 15) (Caulobacter crescentus).